A 303-amino-acid polypeptide reads, in one-letter code: Cyclin-dependent kinase 4 (303 aa).

A2 carries the post-translational modification N-acetylalanine. The Protein kinase domain occupies Y6–L295. Residues I12–V20 and K35 contribute to the ATP site. Residues P50–E56 form a required for binding D-type cyclins region. The active-site Proton acceptor is the D140. T172 is subject to Phosphothreonine; by CAK. At S300 the chain carries Phosphoserine.

This sequence belongs to the protein kinase superfamily. CMGC Ser/Thr protein kinase family. CDC2/CDKX subfamily. Component of the D-CDK4 complex, composed of CDK4 and some D-type G1 cyclin (CCND1, CCND2 or CCND3). Interacts directly in the complex with CCND1, CCND2 or CCND3. Interacts with ZNF655. Forms a ternary complex, cyclin D-CDK4-CDKN1B, involved in modulating CDK4 enzymatic activity. Interacts directly with CDKN1B (phosphorylated on 'Tyr-88' and 'Tyr-89'); the interaction allows assembly of the cyclin D-CDK4 complex, Thr-172 phosphorylation, nuclear translocation and enhances the cyclin D-CDK4 complex activity. CDK4 activity is either inhibited or enhanced depending on stoichiometry of complex. The non-tyrosine-phosphorylated form of CDKN1B prevents T-loop phosphorylation of CDK4 producing inactive CDK4. Interacts (unphosphorylated form) with CDK2. Also forms ternary complexes with CDKN1A or CDKN2A. Interacts directly with CDKN1A (via its N-terminal); the interaction promotes the assembly of the cyclin D-CDK4 complex, its nuclear translocation and promotes the cyclin D-dependent enzyme activity of CDK4. Interacts with CCND1; the interaction is prevented with the binding of CCND1 to INSM1 during cell cycle progression. Interacts with SEI1 and CCND1. Probably forms a complex composed of chaperones HSP90 and HSP70, co-chaperones CDC37, PPP5C, TSC1 and client protein TSC2, CDK4, AKT, RAF1 and NR3C1; this complex does not contain co-chaperones STIP1/HOP and PTGES3/p23. Interacts with CEBPA (when phosphorylated). Interacts with FNIP1 and FNIP2. Post-translationally, phosphorylation at Thr-172 is required for enzymatic activity. Phosphorylated, in vitro, at this site by CCNH-CDK7, but, in vivo, appears to be phosphorylated by a proline-directed kinase. In the cyclin D-CDK4-CDKN1B complex, this phosphorylation and consequent CDK4 enzyme activity, is dependent on the tyrosine phosphorylation state of CDKN1B. Thus, in proliferating cells, CDK4 within the complex is phosphorylated on Thr-172 in the T-loop. In resting cells, phosphorylation on Thr-172 is prevented by the non-tyrosine-phosphorylated form of CDKN1B.

It is found in the cytoplasm. Its subcellular location is the nucleus. The protein localises to the nucleus membrane. The catalysed reaction is L-seryl-[protein] + ATP = O-phospho-L-seryl-[protein] + ADP + H(+). It carries out the reaction L-threonyl-[protein] + ATP = O-phospho-L-threonyl-[protein] + ADP + H(+). Both phosphorylation at Thr-172 and binding of a D-type cyclin are necessary for enzymatic activity. Full activation of the cyclin-D-CDK4 complex appears to require other factors such as recruitment of the substrate via a substrate recruitment motif, and/or formation of the CDKN1B ternary complex. Inhibited by INK4 family members. In resting cells, the non-tyrosine-phosphorylated form of CDKN1B prevents phosphorylation at Thr-172 and inactivation, while, in proliferating cells, tyrosine phosphorylation of CDKN1B allows phosphorylation of Thr-172 of CDK4 and subsequent activation. Functionally, ser/Thr-kinase component of cyclin D-CDK4 (DC) complexes that phosphorylate and inhibit members of the retinoblastoma (RB) protein family including RB1 and regulate the cell-cycle during G(1)/S transition. Phosphorylation of RB1 allows dissociation of the transcription factor E2F from the RB/E2F complexes and the subsequent transcription of E2F target genes which are responsible for the progression through the G(1) phase. Hypophosphorylates RB1 in early G(1) phase. Cyclin D-CDK4 complexes are major integrators of various mitogenenic and antimitogenic signals. Also phosphorylates SMAD3 in a cell-cycle-dependent manner and represses its transcriptional activity. Component of the ternary complex, cyclin D/CDK4/CDKN1B, required for nuclear translocation and activity of the cyclin D-CDK4 complex. This chain is Cyclin-dependent kinase 4 (Cdk4), found in Mus musculus (Mouse).